Here is a 393-residue protein sequence, read N- to C-terminus: Formate-dependent phosphoribosylglycinamide formyltransferase (393 aa).

N(1)-(5-phospho-beta-D-ribosyl)glycinamide contacts are provided by residues Glu22–Leu23 and Glu82. Residues Arg114, Lys155, Ser160–Gln165, Glu195–Ile198, and Glu203 each bind ATP. Residues Arg119–Leu308 enclose the ATP-grasp domain. Residues Glu267 and Glu279 each contribute to the Mg(2+) site. N(1)-(5-phospho-beta-D-ribosyl)glycinamide contacts are provided by residues Asp286, Lys356, and Arg363–Arg364.

Belongs to the PurK/PurT family. Homodimer.

It catalyses the reaction N(1)-(5-phospho-beta-D-ribosyl)glycinamide + formate + ATP = N(2)-formyl-N(1)-(5-phospho-beta-D-ribosyl)glycinamide + ADP + phosphate + H(+). The protein operates within purine metabolism; IMP biosynthesis via de novo pathway; N(2)-formyl-N(1)-(5-phospho-D-ribosyl)glycinamide from N(1)-(5-phospho-D-ribosyl)glycinamide (formate route): step 1/1. In terms of biological role, involved in the de novo purine biosynthesis. Catalyzes the transfer of formate to 5-phospho-ribosyl-glycinamide (GAR), producing 5-phospho-ribosyl-N-formylglycinamide (FGAR). Formate is provided by PurU via hydrolysis of 10-formyl-tetrahydrofolate. This chain is Formate-dependent phosphoribosylglycinamide formyltransferase, found in Pseudomonas putida (strain W619).